Consider the following 256-residue polypeptide: Thiazole synthase (256 aa).

Lysine 99 acts as the Schiff-base intermediate with DXP in catalysis. 1-deoxy-D-xylulose 5-phosphate-binding positions include glycine 160, 186–187 (AG), and 208–209 (NT).

Belongs to the ThiG family. In terms of assembly, homotetramer. Forms heterodimers with either ThiH or ThiS.

It localises to the cytoplasm. The catalysed reaction is [ThiS sulfur-carrier protein]-C-terminal-Gly-aminoethanethioate + 2-iminoacetate + 1-deoxy-D-xylulose 5-phosphate = [ThiS sulfur-carrier protein]-C-terminal Gly-Gly + 2-[(2R,5Z)-2-carboxy-4-methylthiazol-5(2H)-ylidene]ethyl phosphate + 2 H2O + H(+). The protein operates within cofactor biosynthesis; thiamine diphosphate biosynthesis. In terms of biological role, catalyzes the rearrangement of 1-deoxy-D-xylulose 5-phosphate (DXP) to produce the thiazole phosphate moiety of thiamine. Sulfur is provided by the thiocarboxylate moiety of the carrier protein ThiS. In vitro, sulfur can be provided by H(2)S. The polypeptide is Thiazole synthase (Neorickettsia sennetsu (strain ATCC VR-367 / Miyayama) (Ehrlichia sennetsu)).